We begin with the raw amino-acid sequence, 444 residues long: MSATITATSATATATQKKPFYRILYVQVLAAIVLGVIVGWLWPDIGKNDWIKAMGDGFVKLIKMAIAPIIFCTVVSGIAHISEVKKVGRVAVKALVYFEVVSTFALALGLVVANVLRPGAGFQGQSNAAAVAGYAKQASEMKSVDFVLHIIPDTVVGAFAQGEILQVLLFAILFGFALMGLGERAHTVRSFVDDVAHAMFGVISIVVKVAPIGAFGAMAYTIGRYGPQALGNLAGLIATFYLTAFLFVVVGLGIIARIAGFSIFKFLKYIKDELLIVLGTSSSESALPQMMEKLEILGCSKSVVGLVVPTGYSFNLDGTNIYMTLATLFIAQAMNVDLSFGEQMTILVVAMLTSKGASGITGAGFITLAGTLAAVRPELLPGMAIVLGIDKFMSECRALTNLCGNGVACVVVAWWEGELDREKLRVALDRNVDPTDLEVAVTTG.

The next 6 membrane-spanning stretches (helical) occupy residues 23 to 43, 61 to 81, 95 to 115, 162 to 182, 198 to 218, and 236 to 256; these read ILYVQVLAAIVLGVIVGWLWP, LIKMAIAPIIFCTVVSGIAHI, LVYFEVVSTFALALGLVVANV, GEILQVLLFAILFGFALMGLG, AMFGVISIVVKVAPIGAFGAM, and LIATFYLTAFLFVVVGLGIIA.

Belongs to the dicarboxylate/amino acid:cation symporter (DAACS) (TC 2.A.23) family.

The protein resides in the cell inner membrane. In terms of biological role, responsible for the transport of dicarboxylates such as succinate, fumarate, and malate from the periplasm across the membrane. The protein is C4-dicarboxylate transport protein 2 of Bradyrhizobium diazoefficiens (strain JCM 10833 / BCRC 13528 / IAM 13628 / NBRC 14792 / USDA 110).